Here is a 189-residue protein sequence, read N- to C-terminus: ATP-dependent protease subunit HslV (189 aa).

Thr12 is a catalytic residue. Positions 172, 175, and 178 each coordinate Na(+).

Belongs to the peptidase T1B family. HslV subfamily. As to quaternary structure, a double ring-shaped homohexamer of HslV is capped on each side by a ring-shaped HslU homohexamer. The assembly of the HslU/HslV complex is dependent on binding of ATP.

The protein resides in the cytoplasm. The enzyme catalyses ATP-dependent cleavage of peptide bonds with broad specificity.. Its activity is regulated as follows. Allosterically activated by HslU binding. Functionally, protease subunit of a proteasome-like degradation complex believed to be a general protein degrading machinery. The sequence is that of ATP-dependent protease subunit HslV from Anaplasma phagocytophilum (strain HZ).